Here is a 224-residue protein sequence, read N- to C-terminus: Cytidylate kinase (224 aa).

11 to 19 (GPAAAGKST) contributes to the ATP binding site.

This sequence belongs to the cytidylate kinase family. Type 1 subfamily.

The protein localises to the cytoplasm. The catalysed reaction is CMP + ATP = CDP + ADP. The enzyme catalyses dCMP + ATP = dCDP + ADP. The chain is Cytidylate kinase from Listeria monocytogenes serotype 4b (strain CLIP80459).